The primary structure comprises 220 residues: Deoxyribose-phosphate aldolase (220 aa).

Asp-89 serves as the catalytic Proton donor/acceptor. Lys-151 acts as the Schiff-base intermediate with acetaldehyde in catalysis. Lys-180 (proton donor/acceptor) is an active-site residue.

Belongs to the DeoC/FbaB aldolase family. DeoC type 1 subfamily.

The protein localises to the cytoplasm. It catalyses the reaction 2-deoxy-D-ribose 5-phosphate = D-glyceraldehyde 3-phosphate + acetaldehyde. It functions in the pathway carbohydrate degradation; 2-deoxy-D-ribose 1-phosphate degradation; D-glyceraldehyde 3-phosphate and acetaldehyde from 2-deoxy-alpha-D-ribose 1-phosphate: step 2/2. Catalyzes a reversible aldol reaction between acetaldehyde and D-glyceraldehyde 3-phosphate to generate 2-deoxy-D-ribose 5-phosphate. The protein is Deoxyribose-phosphate aldolase of Streptococcus pneumoniae (strain Hungary19A-6).